We begin with the raw amino-acid sequence, 401 residues long: Bifunctional D-cysteine desulfhydrase/1-aminocyclopropane-1-carboxylate deaminase, mitochondrial (401 aa).

Residues 1-37 constitute a mitochondrion transit peptide; it reads MRGRSLTLSRVKLELARRSMSATSVPSMADFLTKKPY. Arg2 carries the N-acetylserine modification. An N6-(pyridoxal phosphate)lysine modification is found at Lys93. Ser120 acts as the Nucleophile in catalysis.

Belongs to the ACC deaminase/D-cysteine desulfhydrase family. Requires pyridoxal 5'-phosphate as cofactor. As to expression, highly expressed in stems and cauline leaves, and at lower levels in roots, rosette leaves and flowers.

It is found in the mitochondrion. It catalyses the reaction D-cysteine + H2O = hydrogen sulfide + pyruvate + NH4(+) + H(+). The catalysed reaction is 1-aminocyclopropane-1-carboxylate + H2O = 2-oxobutanoate + NH4(+). In terms of biological role, catalyzes the production of hydrogen sulfide (H2S) from cysteine. Is mainly responsible for the degradation of cysteine to generate H2S, a regulator of stomatal movement and closure. Has high affinity for D-cysteine. Possesses 1-aminocyclopropane-1-carboxylic acid (ACC) deaminase activity. Acts as a regulator of ACC levels and causes changes in ethylene levels. The chain is Bifunctional D-cysteine desulfhydrase/1-aminocyclopropane-1-carboxylate deaminase, mitochondrial (DCD) from Arabidopsis thaliana (Mouse-ear cress).